A 324-amino-acid chain; its full sequence is Anthranilate phosphoribosyltransferase (324 aa).

5-phospho-alpha-D-ribose 1-diphosphate is bound by residues Gly75, Gly78–Asp79, Thr83, Asn85–Thr88, Lys102–Gly110, and Ser114. Gly75 provides a ligand contact to anthranilate. Position 87 (Ser87) interacts with Mg(2+). Asn105 serves as a coordination point for anthranilate. Anthranilate is bound at residue Arg160. Positions 216 and 217 each coordinate Mg(2+).

Belongs to the anthranilate phosphoribosyltransferase family. As to quaternary structure, homodimer. Mg(2+) serves as cofactor.

The catalysed reaction is N-(5-phospho-beta-D-ribosyl)anthranilate + diphosphate = 5-phospho-alpha-D-ribose 1-diphosphate + anthranilate. It functions in the pathway amino-acid biosynthesis; L-tryptophan biosynthesis; L-tryptophan from chorismate: step 2/5. Functionally, catalyzes the transfer of the phosphoribosyl group of 5-phosphorylribose-1-pyrophosphate (PRPP) to anthranilate to yield N-(5'-phosphoribosyl)-anthranilate (PRA). In Picrophilus torridus (strain ATCC 700027 / DSM 9790 / JCM 10055 / NBRC 100828 / KAW 2/3), this protein is Anthranilate phosphoribosyltransferase.